A 256-amino-acid chain; its full sequence is Trans-aconitate 2-methyltransferase (256 aa).

It belongs to the methyltransferase superfamily. Tam family.

The protein resides in the cytoplasm. It carries out the reaction trans-aconitate + S-adenosyl-L-methionine = (E)-3-(methoxycarbonyl)pent-2-enedioate + S-adenosyl-L-homocysteine. Catalyzes the S-adenosylmethionine monomethyl esterification of trans-aconitate. The sequence is that of Trans-aconitate 2-methyltransferase from Afipia carboxidovorans (strain ATCC 49405 / DSM 1227 / KCTC 32145 / OM5) (Oligotropha carboxidovorans).